The primary structure comprises 158 residues: S-ribosylhomocysteine lyase (158 aa).

Fe cation-binding residues include His54, His58, and Cys124.

It belongs to the LuxS family. As to quaternary structure, homodimer. Fe cation is required as a cofactor.

It carries out the reaction S-(5-deoxy-D-ribos-5-yl)-L-homocysteine = (S)-4,5-dihydroxypentane-2,3-dione + L-homocysteine. Involved in the synthesis of autoinducer 2 (AI-2) which is secreted by bacteria and is used to communicate both the cell density and the metabolic potential of the environment. The regulation of gene expression in response to changes in cell density is called quorum sensing. Catalyzes the transformation of S-ribosylhomocysteine (RHC) to homocysteine (HC) and 4,5-dihydroxy-2,3-pentadione (DPD). This Lactiplantibacillus plantarum (strain ATCC BAA-793 / NCIMB 8826 / WCFS1) (Lactobacillus plantarum) protein is S-ribosylhomocysteine lyase.